Reading from the N-terminus, the 108-residue chain is Small ribosomal subunit protein eS25x (108 aa).

Residues 1 to 36 (MAPKKDKVPPPSSKPAKSGGGKQKKKKWSKGKQKEK) are disordered. Residues 22–31 (KQKKKKWSKG) show a composition bias toward basic residues.

The protein belongs to the eukaryotic ribosomal protein eS25 family.

The chain is Small ribosomal subunit protein eS25x (RPS25D) from Arabidopsis thaliana (Mouse-ear cress).